We begin with the raw amino-acid sequence, 241 residues long: DnaJ homolog subfamily B member 6 (241 aa).

An interaction with HSP70 region spans residues 2–146 (VDYYEVLGVQ…TGSFFSAFSG (145 aa)). The J domain occupies 3–69 (DYYEVLGVQR…KKRDIYDKYG (67 aa)). An interaction with KRT18 region spans residues 119–241 (FEDFFGNRRG…KEQLLRLDNK (123 aa)). Arg-135 carries the post-translational modification Omega-N-methylarginine.

Homooligomer. Interacts with BAG3, HSPB8 and STUB1. Interacts with ALKBH1. Interacts with HSP70, KRT18 and PTTG.

The protein localises to the cytoplasm. Its subcellular location is the perinuclear region. It localises to the nucleus. It is found in the myofibril. The protein resides in the sarcomere. The protein localises to the z line. Its function is as follows. Has a stimulatory effect on the ATPase activity of HSP70 in a dose-dependent and time-dependent manner and hence acts as a co-chaperone of HSP70. Plays an indispensable role in the organization of KRT8/KRT18 filaments. Acts as an endogenous molecular chaperone for neuronal proteins including huntingtin. Suppresses aggregation and toxicity of polyglutamine-containing, aggregation-prone proteins. Also reduces cellular toxicity and caspase-3 activity. In Macaca fascicularis (Crab-eating macaque), this protein is DnaJ homolog subfamily B member 6.